The chain runs to 150 residues: Soluble pyridine nucleotide transhydrogenase (150 aa).

The protein belongs to the class-I pyridine nucleotide-disulfide oxidoreductase family. Requires FAD as cofactor.

It is found in the cytoplasm. The catalysed reaction is NAD(+) + NADPH = NADH + NADP(+). Its function is as follows. Conversion of NADPH, generated by peripheral catabolic pathways, to NADH, which can enter the respiratory chain for energy generation. The polypeptide is Soluble pyridine nucleotide transhydrogenase (sthA) (Pectobacterium carotovorum subsp. carotovorum (Erwinia carotovora subsp. carotovora)).